The chain runs to 39 residues: Photosystem II reaction center protein J (39 aa).

A helical membrane pass occupies residues leucine 9 to tyrosine 29.

Belongs to the PsbJ family. As to quaternary structure, PSII is composed of 1 copy each of membrane proteins PsbA, PsbB, PsbC, PsbD, PsbE, PsbF, PsbH, PsbI, PsbJ, PsbK, PsbL, PsbM, PsbT, PsbY, PsbZ, Psb30/Ycf12, at least 3 peripheral proteins of the oxygen-evolving complex and a large number of cofactors. It forms dimeric complexes.

The protein resides in the plastid. Its subcellular location is the chloroplast thylakoid membrane. Its function is as follows. One of the components of the core complex of photosystem II (PSII). PSII is a light-driven water:plastoquinone oxidoreductase that uses light energy to abstract electrons from H(2)O, generating O(2) and a proton gradient subsequently used for ATP formation. It consists of a core antenna complex that captures photons, and an electron transfer chain that converts photonic excitation into a charge separation. This is Photosystem II reaction center protein J from Cyanidium caldarium (Red alga).